We begin with the raw amino-acid sequence, 516 residues long: Importin subunit alpha-B (516 aa).

Residues 1–29 are compositionally biased toward basic and acidic residues; sequence MQRSKQETRKSQYKKSIDSDESRRKREEA. The disordered stretch occupies residues 1 to 54; that stretch reads MQRSKQETRKSQYKKSIDSDESRRKREEASLSIRKNKREESLLKKRTQAVPGST. The IBB domain occupies 1 to 55; sequence MQRSKQETRKSQYKKSIDSDESRRKREEASLSIRKNKREESLLKKRTQAVPGSTP. ARM repeat units lie at residues 55–96, 100–140, 143–182, 185–227, 229–268, 271–310, 313–352, 355–394, and 398–437; these read PVKV…KLLS, SPPI…NIAS, PEQTRVVIENGAIQVFVLLLSSPHDDVREQAVWALGNIAG, HYCR…NFCR, KPQPPFEIVRASLPVLAKLIYYQDEEVLIDACWALSYLSD, NERIQEVIDAKVCRKMVELLGHPTIAVQTPALRTIGNIVT, DNQTQIVLSVQALSHLLNLLQSPKRAIRKEACWTISNITA, KNQIQQVIDANIIPSLVYLLANAEFEIQKEAAWAISNATS, and PQQIHFLVSQGCVKPLCDLLKVSDPRIINVALEGIENILV. Residues 490-516 form a disordered region; it reads EQEDEGDLMPEGSSFSFSNQTNSNFNL. Over residues 502 to 516 the composition is skewed to low complexity; it reads SSFSFSNQTNSNFNL.

This sequence belongs to the importin alpha family. As to quaternary structure, forms a complex with tnpo/importin subunit beta.

It is found in the cytoplasm. The protein resides in the nucleus envelope. Functionally, functions in nuclear protein import via a substrate-importin alpha-beta transport complex that passes though the nuclear pore complexes (NPC). Binds specifically and directly to substrates containing either a simple or bipartite NLS motif. The chain is Importin subunit alpha-B from Dictyostelium discoideum (Social amoeba).